The sequence spans 245 residues: DNA repair protein RecO (245 aa).

The protein belongs to the RecO family.

In terms of biological role, involved in DNA repair and RecF pathway recombination. The polypeptide is DNA repair protein RecO (Porphyromonas gingivalis (strain ATCC 33277 / DSM 20709 / CIP 103683 / JCM 12257 / NCTC 11834 / 2561)).